The following is a 658-amino-acid chain: Integrator complex subunit 9 (658 aa).

The interval K550–D574 is disordered. A Nuclear localization signal motif is present at residues K566–R570.

This sequence belongs to the metallo-beta-lactamase superfamily. RNA-metabolizing metallo-beta-lactamase-like family. INTS9 subfamily. As to quaternary structure, component of the Integrator complex, composed of core subunits INTS1, INTS2, INTS3, INTS4, INTS5, INTS6, INTS7, INTS8, INTS9/RC74, INTS10, INTS11/CPSF3L, INTS12, INTS13, INTS14 and INTS15. The core complex associates with protein phosphatase 2A subunits PPP2CA and PPP2R1A, to form the Integrator-PP2A (INTAC) complex. INTS9 is part of the RNA endonuclease subcomplex, composed of INTS4, INTS9, INTS11 and inositol hexakisphosphate (InsP6).

Its subcellular location is the nucleus. The protein localises to the cytoplasm. Component of the integrator complex, a multiprotein complex that terminates RNA polymerase II (Pol II) transcription in the promoter-proximal region of genes. The integrator complex provides a quality checkpoint during transcription elongation by driving premature transcription termination of transcripts that are unfavorably configured for transcriptional elongation: the complex terminates transcription by (1) catalyzing dephosphorylation of the C-terminal domain (CTD) of Pol II subunit POLR2A/RPB1 and SUPT5H/SPT5, (2) degrading the exiting nascent RNA transcript via endonuclease activity and (3) promoting the release of Pol II from bound DNA. The integrator complex is also involved in terminating the synthesis of non-coding Pol II transcripts, such as enhancer RNAs (eRNAs), small nuclear RNAs (snRNAs), telomerase RNAs and long non-coding RNAs (lncRNAs). This Gallus gallus (Chicken) protein is Integrator complex subunit 9 (INTS9).